The chain runs to 816 residues: Homeobox-leucine zipper protein ROC9 (816 aa).

The tract at residues 26-104 (VFGRKNGPAA…RRKNYHRHTA (79 aa)) is disordered. The segment covering 92-101 (KKRRRKNYHR) has biased composition (basic residues). The homeobox DNA-binding region spans 95–154 (RRKNYHRHTAEQIRIMEALFKESPHPDERQRQQVSKQLGLSARQVKFWFQNRRTQIKAVQ). The stretch at 149–182 (QIKAVQERHENSLLKSELEKLQDEHRAMRELAKK) forms a coiled coil. The interval 265 to 296 (KSAADGIASPPCSASAGAMQTNSRSPPLHDHD) is disordered. One can recognise an START domain in the interval 302 to 541 (HDDDKPRILE…LQLQCERMVF (240 aa)).

Belongs to the HD-ZIP homeobox family. Class IV subfamily.

The protein localises to the nucleus. Probable transcription factor. The polypeptide is Homeobox-leucine zipper protein ROC9 (ROC9) (Oryza sativa subsp. japonica (Rice)).